The chain runs to 727 residues: Broad-complex core protein isoforms 1/2/3/4/5 (727 aa).

The BTB domain occupies 32–97; sequence VDVTLACEGR…IYHGEVNVHQ (66 aa). The segment covering 135-149 has biased composition (polar residues); it reads NSGGRTPLNTHTQSL. 5 disordered regions span residues 135–185, 218–378, 445–496, 532–583, and 604–626; these read NSGG…SLPS, RGSD…IGDG, INNS…RPTA, PQQQ…ANTP, and STSGSANSSLNNSNSTLNTSGGL. Residues 227–238 are compositionally biased toward low complexity; the sequence is SGAVGSGSNNNS. The span at 281-298 shows a compositional bias: gly residues; the sequence is TGNGNSGNGNGNGNGASN. Residues 341-355 are compositionally biased toward basic and acidic residues; it reads NDEHSNDSTGEHDAN. Low complexity-rich tracts occupy residues 445–460, 475–495, and 533–568; these read INNSITNNNNNNNNNN, TPSPTTTTLTTPTTTTPTRPT, and QQQQQQQQQHQMSQQQQQQQQQQQQQGNSSSGQQQQ. 2 consecutive C2H2-type zinc fingers follow at residues 636–659 and 666–689; these read FRCNPCNKNLSSLTRLKRHIQNVH and PVCNICKRVYSSLNSLRNHKSIYH. Residues 694 to 727 form a disordered region; that stretch reads QPKQEPGVGATQAAANSFYHQQHQQQQLNHHSSS. Over residues 713 to 727 the composition is skewed to low complexity; it reads HQQHQQQQLNHHSSS.

The protein localises to the nucleus. In terms of biological role, broad-complex proteins are required for puffing and transcription of salivary gland late genes during metamorphosis. The protein is Broad-complex core protein isoforms 1/2/3/4/5 (br) of Drosophila melanogaster (Fruit fly).